Reading from the N-terminus, the 258-residue chain is Large ribosomal subunit protein bL19m (258 aa).

Positions 235-258 (SKGLTGGVGGGGGKQKGQESKKKN) are disordered. The span at 238-249 (LTGGVGGGGGKQ) shows a compositional bias: gly residues.

Belongs to the bacterial ribosomal protein bL19 family. As to quaternary structure, component of the mitochondrial large ribosomal subunit (mt-LSU). Mature N.crassa 74S mitochondrial ribosomes consist of a small (37S) and a large (54S) subunit. The 37S small subunit contains a 16S ribosomal RNA (16S mt-rRNA) and 32 different proteins. The 54S large subunit contains a 23S rRNA (23S mt-rRNA) and 42 different proteins.

Its subcellular location is the mitochondrion. Its function is as follows. Component of the mitochondrial ribosome (mitoribosome), a dedicated translation machinery responsible for the synthesis of mitochondrial genome-encoded proteins, including at least some of the essential transmembrane subunits of the mitochondrial respiratory chain. The mitoribosomes are attached to the mitochondrial inner membrane and translation products are cotranslationally integrated into the membrane. The polypeptide is Large ribosomal subunit protein bL19m (img1) (Neurospora crassa (strain ATCC 24698 / 74-OR23-1A / CBS 708.71 / DSM 1257 / FGSC 987)).